We begin with the raw amino-acid sequence, 161 residues long: Regulator of ribonuclease activity A (161 aa).

This sequence belongs to the RraA family. As to quaternary structure, homotrimer. Binds to both RNA-binding sites in the C-terminal region of Rne and to RhlB.

The protein localises to the cytoplasm. Functionally, globally modulates RNA abundance by binding to RNase E (Rne) and regulating its endonucleolytic activity. Can modulate Rne action in a substrate-dependent manner by altering the composition of the degradosome. Modulates RNA-binding and helicase activities of the degradosome. This is Regulator of ribonuclease activity A from Erwinia tasmaniensis (strain DSM 17950 / CFBP 7177 / CIP 109463 / NCPPB 4357 / Et1/99).